The following is a 190-amino-acid chain: Protein soem-1 (190 aa).

Positions 96–190 (YMEQNMNRVE…LVLKNQLKPV (95 aa)) constitute an SH2 domain.

Interacts with abl-1. Expressed in PQR, but not AQR, Q neuroblast descendents.

Functionally, functions downstream of migratory protein mig-13 and may play a role in the control of Q neuroblast migration during larval development. The protein is Protein soem-1 of Caenorhabditis elegans.